We begin with the raw amino-acid sequence, 202 residues long: Recoverin (202 aa).

A lipid anchor (N-myristoyl glycine) is attached at Gly-2. Position 39 is a cysteine sulfenic acid (-SOH) (Cys-39). EF-hand domains lie at 41-59 (SGRITKQEFQSIYSKFFPE), 61-96 (DPKAYAQHVFRSFDANSDGTLDFKEYVIALHMTSAG), 97-132 (KTNQKLEWAFSLYDVDGNGAISKSEVLEIVMAIFKM), and 147-182 (TPEKRAEKIWGFFGKKDDDKLTEEEFIEGTLANKEI). The Ca(2+) site is built by Asp-74, Asn-76, Asp-78, Thr-80, Glu-85, Asp-110, Asp-112, Asn-114, and Glu-121. An interaction with GRK1 region spans residues 189–192 (EPRK).

This sequence belongs to the recoverin family. As to quaternary structure, homodimer; disulfide-linked. Homodimerization is caused by prolonged intense illumination. May form a complex composed of RHO, GRK1 and RCVRN in a Ca(2+)-dependent manner; RCVRN prevents the interaction between GRK1 and RHO. Interacts (via C-terminus) with GRK1 (via N-terminus); the interaction is Ca(2+)-dependent. Post-translationally, the N-terminal glycine is linked to one of four different types of acyl groups. The most abundant is myristoleate (14:1), but 14:0, 14:2, and 12:0 acyl residues are also present. The Ca(2+) induced exposure of the myristoyl group, known as the calcium-myristoyl switch, promotes RCVRN binding to the photoreceptor cell membranes only when intracellular Ca(2+) concentration is high. In terms of processing, oxidation on Cys-39 occurs in response to prolonged intense illumination and results in the formation of disulfide homodimers, and to a lesser extent disulfide-linked heterodimers.

Its subcellular location is the photoreceptor inner segment. It localises to the cell projection. The protein resides in the cilium. The protein localises to the photoreceptor outer segment. It is found in the photoreceptor outer segment membrane. Its subcellular location is the perikaryon. In terms of biological role, acts as a calcium sensor and regulates phototransduction of cone and rod photoreceptor cells. Modulates light sensitivity of cone photoreceptor in dark and dim conditions. In response to high Ca(2+) levels induced by low light levels, prolongs RHO/rhodopsin activation in rod photoreceptor cells by binding to and inhibiting GRK1-mediated phosphorylation of RHO/rhodopsin. Plays a role in scotopic vision/enhances vision in dim light by enhancing signal transfer between rod photoreceptors and rod bipolar cells. Improves rod photoreceptor sensitivity in dim light and mediates response of rod photoreceptors to facilitate detection of change and motion in bright light. This chain is Recoverin (RCVRN), found in Canis lupus familiaris (Dog).